Here is a 75-residue protein sequence, read N- to C-terminus: U6-lycotoxin-Ls1g (75 aa).

Residues 1–21 (MKLLLFTALVLVVISLIEVEA) form the signal peptide. Positions 22 to 25 (ENER) are excised as a propeptide.

The protein belongs to the neurotoxin 19 (CSTX) family. 06 (U6-Lctx) subfamily. Post-translationally, contains 4 disulfide bonds. Expressed by the venom gland.

It localises to the secreted. The protein is U6-lycotoxin-Ls1g of Lycosa singoriensis (Wolf spider).